A 249-amino-acid chain; its full sequence is MTRKWIKKLQSYIGEFFASFIFGFAVYTSIIGSAQTGQSAGPIIVALTIALSGVAIIYSFCDITVAHFNPAITFSAMCFRRLPFFGGIFIIIFQVAGFIIAGLASVAVLPGKYKNKLEIARPKRVADNVSRGRIFGTEFFLTAILVYVAFAVGVNPYTPPKDEHGDQLDPDEGLTEGRKITAPLAIGFTLGFCALLGIASSGGAFNPGIVLSPMILTGTWDFWWVYLLGQFSGGLLGGGLQRFLLYKIF.

Topologically, residues 1–11 (MTRKWIKKLQS) are cytoplasmic. A helical transmembrane segment spans residues 12-32 (YIGEFFASFIFGFAVYTSIIG). Topologically, residues 33–39 (SAQTGQS) are extracellular. Residues 40-60 (AGPIIVALTIALSGVAIIYSF) form a helical membrane-spanning segment. Residues 61–83 (CDITVAHFNPAITFSAMCFRRLP) are Cytoplasmic-facing. The NPA signature appears at 69 to 71 (NPA). A helical transmembrane segment spans residues 84–104 (FFGGIFIIIFQVAGFIIAGLA). Residues 105–133 (SVAVLPGKYKNKLEIARPKRVADNVSRGR) are Extracellular-facing. The chain crosses the membrane as a helical span at residues 134 to 154 (IFGTEFFLTAILVYVAFAVGV). The Cytoplasmic portion of the chain corresponds to 155 to 179 (NPYTPPKDEHGDQLDPDEGLTEGRK). A helical membrane pass occupies residues 180–200 (ITAPLAIGFTLGFCALLGIAS). Residues 201–223 (SGGAFNPGIVLSPMILTGTWDFW) are Extracellular-facing. The NPG motif lies at 206-208 (NPG). Residues 224–246 (WVYLLGQFSGGLLGGGLQRFLLY) traverse the membrane as a helical segment. The Cytoplasmic portion of the chain corresponds to 247–249 (KIF).

The protein belongs to the MIP/aquaporin (TC 1.A.8) family.

The protein localises to the cell membrane. In terms of biological role, water channel required to facilitate the transport of water across membranes. Involved in osmotolerance. This is Aquaporin (AQP) from Vairimorpha ceranae (strain BRL01) (Microsporidian parasite).